Consider the following 323-residue polypeptide: Beta-ketoacyl-[acyl-carrier-protein] synthase III (323 aa).

Active-site residues include Cys113 and His250. The ACP-binding stretch occupies residues Gln251–Arg255. Asn280 is a catalytic residue.

Belongs to the thiolase-like superfamily. FabH family. In terms of assembly, homodimer.

It localises to the cytoplasm. It catalyses the reaction malonyl-[ACP] + acetyl-CoA + H(+) = 3-oxobutanoyl-[ACP] + CO2 + CoA. The protein operates within lipid metabolism; fatty acid biosynthesis. In terms of biological role, catalyzes the condensation reaction of fatty acid synthesis by the addition to an acyl acceptor of two carbons from malonyl-ACP. Catalyzes the first condensation reaction which initiates fatty acid synthesis and may therefore play a role in governing the total rate of fatty acid production. Possesses both acetoacetyl-ACP synthase and acetyl transacylase activities. Its substrate specificity determines the biosynthesis of branched-chain and/or straight-chain of fatty acids. The sequence is that of Beta-ketoacyl-[acyl-carrier-protein] synthase III from Rhizobium johnstonii (strain DSM 114642 / LMG 32736 / 3841) (Rhizobium leguminosarum bv. viciae).